The chain runs to 309 residues: 4-hydroxy-3-methylbut-2-enyl diphosphate reductase (309 aa).

A [4Fe-4S] cluster-binding site is contributed by Cys-12. (2E)-4-hydroxy-3-methylbut-2-enyl diphosphate-binding residues include His-43 and His-77. Dimethylallyl diphosphate is bound by residues His-43 and His-77. Residues His-43 and His-77 each contribute to the isopentenyl diphosphate site. Cys-99 is a [4Fe-4S] cluster binding site. Position 127 (His-127) interacts with (2E)-4-hydroxy-3-methylbut-2-enyl diphosphate. His-127 contacts dimethylallyl diphosphate. Residue His-127 coordinates isopentenyl diphosphate. Glu-129 (proton donor) is an active-site residue. Thr-167 serves as a coordination point for (2E)-4-hydroxy-3-methylbut-2-enyl diphosphate. Cys-197 lines the [4Fe-4S] cluster pocket. 4 residues coordinate (2E)-4-hydroxy-3-methylbut-2-enyl diphosphate: Ser-225, Ser-226, Asn-227, and Ser-269. Ser-225, Ser-226, Asn-227, and Ser-269 together coordinate dimethylallyl diphosphate. Isopentenyl diphosphate is bound by residues Ser-225, Ser-226, Asn-227, and Ser-269.

This sequence belongs to the IspH family. Requires [4Fe-4S] cluster as cofactor.

The catalysed reaction is isopentenyl diphosphate + 2 oxidized [2Fe-2S]-[ferredoxin] + H2O = (2E)-4-hydroxy-3-methylbut-2-enyl diphosphate + 2 reduced [2Fe-2S]-[ferredoxin] + 2 H(+). The enzyme catalyses dimethylallyl diphosphate + 2 oxidized [2Fe-2S]-[ferredoxin] + H2O = (2E)-4-hydroxy-3-methylbut-2-enyl diphosphate + 2 reduced [2Fe-2S]-[ferredoxin] + 2 H(+). It functions in the pathway isoprenoid biosynthesis; dimethylallyl diphosphate biosynthesis; dimethylallyl diphosphate from (2E)-4-hydroxy-3-methylbutenyl diphosphate: step 1/1. Its pathway is isoprenoid biosynthesis; isopentenyl diphosphate biosynthesis via DXP pathway; isopentenyl diphosphate from 1-deoxy-D-xylulose 5-phosphate: step 6/6. Its function is as follows. Catalyzes the conversion of 1-hydroxy-2-methyl-2-(E)-butenyl 4-diphosphate (HMBPP) into a mixture of isopentenyl diphosphate (IPP) and dimethylallyl diphosphate (DMAPP). Acts in the terminal step of the DOXP/MEP pathway for isoprenoid precursor biosynthesis. This Wolbachia pipientis wMel protein is 4-hydroxy-3-methylbut-2-enyl diphosphate reductase.